The following is a 968-amino-acid chain: RNA polymerase-associated protein RapA (968 aa).

Positions 163-332 (EVGQRFAPRV…FARLRLLDPD (170 aa)) constitute a Helicase ATP-binding domain. An ATP-binding site is contributed by 176 to 183 (DEVGLGKT). The short motif at 278 to 281 (DEAH) is the DEAH box element. A Helicase C-terminal domain is found at 491–678 (RVDWLIDFLK…GTKARYQELK (188 aa)).

This sequence belongs to the SNF2/RAD54 helicase family. RapA subfamily. Interacts with the RNAP. Has a higher affinity for the core RNAP than for the holoenzyme. Its ATPase activity is stimulated by binding to RNAP.

In terms of biological role, transcription regulator that activates transcription by stimulating RNA polymerase (RNAP) recycling in case of stress conditions such as supercoiled DNA or high salt concentrations. Probably acts by releasing the RNAP, when it is trapped or immobilized on tightly supercoiled DNA. Does not activate transcription on linear DNA. Probably not involved in DNA repair. The sequence is that of RNA polymerase-associated protein RapA from Shewanella pealeana (strain ATCC 700345 / ANG-SQ1).